A 227-amino-acid chain; its full sequence is Uracil-DNA glycosylase (227 aa).

Residue Asp68 is the Proton acceptor of the active site.

It belongs to the uracil-DNA glycosylase (UDG) superfamily. UNG family.

The protein resides in the cytoplasm. The enzyme catalyses Hydrolyzes single-stranded DNA or mismatched double-stranded DNA and polynucleotides, releasing free uracil.. Functionally, excises uracil residues from the DNA which can arise as a result of misincorporation of dUMP residues by DNA polymerase or due to deamination of cytosine. The chain is Uracil-DNA glycosylase from Mycobacterium sp. (strain JLS).